A 235-amino-acid chain; its full sequence is Glucosamine-6-phosphate deaminase (235 aa).

The Proton acceptor; for enolization step role is filled by Asp62. Asn128 (for ring-opening step) is an active-site residue. His130 acts as the Proton acceptor; for ring-opening step in catalysis. Residue Glu135 is the For ring-opening step of the active site.

This sequence belongs to the glucosamine/galactosamine-6-phosphate isomerase family. NagB subfamily.

It carries out the reaction alpha-D-glucosamine 6-phosphate + H2O = beta-D-fructose 6-phosphate + NH4(+). The protein operates within amino-sugar metabolism; N-acetylneuraminate degradation; D-fructose 6-phosphate from N-acetylneuraminate: step 5/5. In terms of biological role, catalyzes the reversible isomerization-deamination of glucosamine 6-phosphate (GlcN6P) to form fructose 6-phosphate (Fru6P) and ammonium ion. The chain is Glucosamine-6-phosphate deaminase from Streptococcus gordonii (strain Challis / ATCC 35105 / BCRC 15272 / CH1 / DL1 / V288).